Here is a 98-residue protein sequence, read N- to C-terminus: Large ribosomal subunit protein uL23 (98 aa).

Belongs to the universal ribosomal protein uL23 family. Part of the 50S ribosomal subunit. Contacts protein L29, and trigger factor when it is bound to the ribosome.

One of the early assembly proteins it binds 23S rRNA. One of the proteins that surrounds the polypeptide exit tunnel on the outside of the ribosome. Forms the main docking site for trigger factor binding to the ribosome. In Rickettsia felis (strain ATCC VR-1525 / URRWXCal2) (Rickettsia azadi), this protein is Large ribosomal subunit protein uL23.